Reading from the N-terminus, the 293-residue chain is ATP phosphoribosyltransferase (293 aa).

It belongs to the ATP phosphoribosyltransferase family. Long subfamily. It depends on Mg(2+) as a cofactor.

The protein resides in the cytoplasm. The enzyme catalyses 1-(5-phospho-beta-D-ribosyl)-ATP + diphosphate = 5-phospho-alpha-D-ribose 1-diphosphate + ATP. Its pathway is amino-acid biosynthesis; L-histidine biosynthesis; L-histidine from 5-phospho-alpha-D-ribose 1-diphosphate: step 1/9. Its activity is regulated as follows. Feedback inhibited by histidine. Functionally, catalyzes the condensation of ATP and 5-phosphoribose 1-diphosphate to form N'-(5'-phosphoribosyl)-ATP (PR-ATP). Has a crucial role in the pathway because the rate of histidine biosynthesis seems to be controlled primarily by regulation of HisG enzymatic activity. This chain is ATP phosphoribosyltransferase, found in Nitratidesulfovibrio vulgaris (strain DP4) (Desulfovibrio vulgaris).